A 393-amino-acid polypeptide reads, in one-letter code: Formate-dependent phosphoribosylglycinamide formyltransferase (393 aa).

N(1)-(5-phospho-beta-D-ribosyl)glycinamide-binding positions include 22–23 (EL) and Glu82. ATP contacts are provided by residues Arg114, Lys155, 160–165 (SSGKGQ), 195–198 (EGFI), and Glu203. One can recognise an ATP-grasp domain in the interval 119 to 308 (RLAAEELKLP…QFALHARAIL (190 aa)). Mg(2+) contacts are provided by Glu267 and Glu279. N(1)-(5-phospho-beta-D-ribosyl)glycinamide contacts are provided by residues Asp286, Lys356, and 363–364 (RR).

Belongs to the PurK/PurT family. As to quaternary structure, homodimer.

The catalysed reaction is N(1)-(5-phospho-beta-D-ribosyl)glycinamide + formate + ATP = N(2)-formyl-N(1)-(5-phospho-beta-D-ribosyl)glycinamide + ADP + phosphate + H(+). The protein operates within purine metabolism; IMP biosynthesis via de novo pathway; N(2)-formyl-N(1)-(5-phospho-D-ribosyl)glycinamide from N(1)-(5-phospho-D-ribosyl)glycinamide (formate route): step 1/1. Functionally, involved in the de novo purine biosynthesis. Catalyzes the transfer of formate to 5-phospho-ribosyl-glycinamide (GAR), producing 5-phospho-ribosyl-N-formylglycinamide (FGAR). Formate is provided by PurU via hydrolysis of 10-formyl-tetrahydrofolate. The protein is Formate-dependent phosphoribosylglycinamide formyltransferase of Pseudomonas syringae pv. syringae (strain B728a).